A 431-amino-acid chain; its full sequence is Pachytene checkpoint protein 2 homolog (431 aa).

An N-acetylmethionine modification is found at Met1. ATP is bound at residue 179–186 (GPPGTGKT).

It belongs to the AAA ATPase family. PCH2 subfamily. As to quaternary structure, specifically interacts with the ligand binding domain of the thyroid receptor (TR). This interaction does not require the presence of thyroid hormone for its interaction. Interacts with proteasome subunit PSMA8; to participate in meiosis progression during spermatogenesis.

Its function is as follows. Plays a key role in chromosome recombination and chromosome structure development during meiosis. Required at early steps in meiotic recombination that leads to non-crossovers pathways. Also needed for efficient completion of homologous synapsis by influencing crossover distribution along the chromosomes affecting both crossovers and non-crossovers pathways. Also required for development of higher-order chromosome structures and is needed for synaptonemal-complex formation. In males, required for efficient synapsis of the sex chromosomes and for sex body formation. Promotes early steps of the DNA double-strand breaks (DSBs) repair process upstream of the assembly of RAD51 complexes. Required for depletion of HORMAD1 and HORMAD2 from synapsed chromosomes. Plays a role in mitotic spindle assembly checkpoint (SAC) activation. The chain is Pachytene checkpoint protein 2 homolog (TRIP13) from Sus scrofa (Pig).